The following is a 330-amino-acid chain: ADP-L-glycero-D-manno-heptose-6-epimerase (330 aa).

Residues 11 to 12 (FI), 32 to 33 (DN), Lys-39, Lys-54, 75 to 79 (EGACS), and Asn-92 contribute to the NADP(+) site. Residue Tyr-139 is the Proton acceptor of the active site. Residue Lys-143 participates in NADP(+) binding. Asn-168 contacts substrate. Val-169 and Lys-177 together coordinate NADP(+). The Proton acceptor role is filled by Lys-177. Residues Arg-179, His-186, 200–203 (FGEY), Arg-213, and Tyr-292 each bind substrate.

Belongs to the NAD(P)-dependent epimerase/dehydratase family. HldD subfamily. In terms of assembly, homopentamer. NADP(+) serves as cofactor.

It catalyses the reaction ADP-D-glycero-beta-D-manno-heptose = ADP-L-glycero-beta-D-manno-heptose. Its pathway is nucleotide-sugar biosynthesis; ADP-L-glycero-beta-D-manno-heptose biosynthesis; ADP-L-glycero-beta-D-manno-heptose from D-glycero-beta-D-manno-heptose 7-phosphate: step 4/4. Its function is as follows. Catalyzes the interconversion between ADP-D-glycero-beta-D-manno-heptose and ADP-L-glycero-beta-D-manno-heptose via an epimerization at carbon 6 of the heptose. This is ADP-L-glycero-D-manno-heptose-6-epimerase from Paraburkholderia xenovorans (strain LB400).